Here is a 424-residue protein sequence, read N- to C-terminus: Serine--tRNA ligase (424 aa).

Residue Thr-232–Glu-234 coordinates L-serine. Position 263-265 (Arg-263–Glu-265) interacts with ATP. Glu-286 provides a ligand contact to L-serine. Glu-350–Ser-353 provides a ligand contact to ATP. Ser-386 lines the L-serine pocket.

This sequence belongs to the class-II aminoacyl-tRNA synthetase family. Type-1 seryl-tRNA synthetase subfamily. Homodimer. The tRNA molecule binds across the dimer.

It localises to the cytoplasm. The enzyme catalyses tRNA(Ser) + L-serine + ATP = L-seryl-tRNA(Ser) + AMP + diphosphate + H(+). It catalyses the reaction tRNA(Sec) + L-serine + ATP = L-seryl-tRNA(Sec) + AMP + diphosphate + H(+). Its pathway is aminoacyl-tRNA biosynthesis; selenocysteinyl-tRNA(Sec) biosynthesis; L-seryl-tRNA(Sec) from L-serine and tRNA(Sec): step 1/1. Its function is as follows. Catalyzes the attachment of serine to tRNA(Ser). Is also able to aminoacylate tRNA(Sec) with serine, to form the misacylated tRNA L-seryl-tRNA(Sec), which will be further converted into selenocysteinyl-tRNA(Sec). The polypeptide is Serine--tRNA ligase (Onion yellows phytoplasma (strain OY-M)).